The chain runs to 1995 residues: uncharacterized protein (1995 aa).

The next 7 membrane-spanning stretches (helical) occupy residues 31–51 (NYTEFGAVFTYFIFSIGEFFK), 53–73 (FFSFSFLNNIWSIPIIIPDIA), 106–126 (LVIFEKFVIGIINSLFLILPT), 157–177 (FLWLASIILGWRFFVIPWLSL), 212–232 (IFLLNFLLALTEQSCIYPFIS), 254–274 (FLLIHGAYLLGILFGSFSLLQ), and 307–327 (ILNFTFLYATMLCAIASIPYY). Disordered stretches follow at residues 1418–1441 (SLKKSQIKKRSRHSWKKRSRHQFS) and 1848–1883 (DLRWRPSSRTKQKRKDNTRSSAASKTKSNKRVKTNP). Basic residues-rich tracts occupy residues 1422-1441 (SQIKKRSRHSWKKRSRHQFS) and 1853-1863 (PSSRTKQKRKD).

The protein belongs to the ycf78 family.

Its subcellular location is the plastid. The protein resides in the chloroplast membrane. Essential for cell growth. May be involved in binding chloroplast DNA to either the chloroplast envelope or the thylakoid membrane. This is an uncharacterized protein from Chlamydomonas reinhardtii (Chlamydomonas smithii).